The sequence spans 236 residues: Sperm flagellar protein 1 (236 aa).

The Calponin-homology (CH) domain occupies 7–112; the sequence is EEALHQLYLW…VLIPLRQRLE (106 aa). Positions 118–177 are disordered; that stretch reads RKQGIGSLQELAPQDGTDYMDVGLSQKARGEGVPDPQGRGQLREGRLPVPRPPGDSQALQ. The interval 183 to 236 is essential for homodimerization and microtubule bundling activity; the sequence is ILQIAEKEQELLASQETVQVLQMKVRRLEHLLQLKNVRIEDLSRRLQQAERKQR.

In terms of assembly, homodimer. Interacts with actin, TJP1, CGN and CDH1.

The protein localises to the cytoplasm. Its subcellular location is the cell projection. The protein resides in the cilium. It is found in the flagellum. It localises to the cytoskeleton. The protein localises to the cilium axoneme. Its subcellular location is the apical cell membrane. The protein resides in the basolateral cell membrane. It is found in the stress fiber. It localises to the microvillus. The protein localises to the lamellipodium. Its subcellular location is the filopodium. In terms of biological role, microtubule-associated protein involved in the stabilization of microtubules along the axis of migration during radial intercalation. Promotes the establishment and stabilization of an axis of microtubules required for the active migration of cells into the outer epithelium. Microtubule-associated protein that promotes microtubule bundling and stabilizes microtubules against depolymerization in response to cold shock. Essential for ciliary central apparatus formation which requires both its microtubule-binding and bundling activities and for ciliary localization of HYDIN and SPAG6 in ependymal cilia. Binds actin in intestinal epithelial cells (IECs), essential for IECs survival and contributes to formation of filopodia and lamellipodia in migrating IECs. Regulates planar cell polarity signaling pathway and asymmetric microtubule accumulation in ciliated epithelia. The protein is Sperm flagellar protein 1 (SPEF1) of Bos taurus (Bovine).